A 369-amino-acid chain; its full sequence is Opsin Rh6 (369 aa).

Residues 1–46 (MASLHPPSFAYMRDGRNLSLAESVPAEIMHMVDPYWYQWPPLEPMW) lie on the Extracellular side of the membrane. Asparagine 17 is a glycosylation site (N-linked (GlcNAc...) asparagine). Residues 47–71 (FGIIGFVIAILGTMSLAGNFIVMYI) form a helical membrane-spanning segment. Residues 72–83 (FTSSKGLRTPSN) lie on the Cytoplasmic side of the membrane. A helical transmembrane segment spans residues 84–109 (MFVVNLAFSDFMMMFTMFPPVVLNGF). Over 110 to 123 (YGTWIMGPFLCELY) the chain is Extracellular. Cysteines 120 and 197 form a disulfide. Residues 124–143 (GMFGSLFGCVSIWSMTLIAY) form a helical membrane-spanning segment. At 144–162 (DRYCVIVKGMARKPLTATA) the chain is on the cytoplasmic side. Residues 163 to 186 (AVLRLMVVWTICGAWALMPLFGWN) form a helical membrane-spanning segment. At 187 to 210 (RYVPEGNMTACGTDYFAKDWWNRS) the chain is on the extracellular side. N-linked (GlcNAc...) asparagine glycans are attached at residues asparagine 193 and asparagine 208. A helical transmembrane segment spans residues 211-238 (YIIVYSLWVYLTPLLTIIFSYWHIMKAV). Over 239 to 274 (AAHEKAMREQAKKMNVASLRNSEADKSKAIEIKLAK) the chain is Cytoplasmic. Residues 275–298 (VALTTISLWFFAWTPYTIINYAGI) form a helical membrane-spanning segment. Residues 299 to 305 (FESMHLS) lie on the Extracellular side of the membrane. A helical membrane pass occupies residues 306–330 (PLSTICGSVFAKANAVCNPIVYGLS). N6-(retinylidene)lysine is present on lysine 317. The Cytoplasmic segment spans residues 331-369 (HPKYKQVLREKMPCLACGKDDLTSDSRTQATAEISESQA).

The protein belongs to the G-protein coupled receptor 1 family. Opsin subfamily. In terms of processing, phosphorylated on some or all of the serine and threonine residues present in the C-terminal region. Each Drosophila eye is composed of 800 facets or ommatidia. Each ommatidium contains 8 photoreceptor cells (R1-R8), the R1 to R6 cells are outer cells, while R7 and R8 are inner cells. Rh6 is expressed in a subset of R8 cells, most likely expressed in the subset of R8 cells paired with Rh4-expressing R7 cells (R7y).

The protein localises to the membrane. Functionally, visual pigments are the light-absorbing molecules that mediate vision. They consist of an apoprotein, opsin, covalently linked to cis-retinal. The chain is Opsin Rh6 (Rh6) from Drosophila melanogaster (Fruit fly).